The chain runs to 234 residues: Phosphoribosylaminoimidazole-succinocarboxamide synthase (234 aa).

Belongs to the SAICAR synthetase family.

It catalyses the reaction 5-amino-1-(5-phospho-D-ribosyl)imidazole-4-carboxylate + L-aspartate + ATP = (2S)-2-[5-amino-1-(5-phospho-beta-D-ribosyl)imidazole-4-carboxamido]succinate + ADP + phosphate + 2 H(+). Its pathway is purine metabolism; IMP biosynthesis via de novo pathway; 5-amino-1-(5-phospho-D-ribosyl)imidazole-4-carboxamide from 5-amino-1-(5-phospho-D-ribosyl)imidazole-4-carboxylate: step 1/2. The protein is Phosphoribosylaminoimidazole-succinocarboxamide synthase of Staphylococcus carnosus (strain TM300).